The primary structure comprises 146 residues: Decoration protein (146 aa).

Homotrimer. Interacts with the major capsid protein.

Its subcellular location is the virion. Its function is as follows. Cooperatively binds the expanded capsid, thereby stabilizing the mature capsid shell and allowing the large viral DNA to be packaged. Trimers of capsid decoration proteins molecules are located at local and icosahedral threefold axes and stabilize the expanded capsid, which shows increased spacing between capsomers. The sequence is that of Decoration protein from Thermus thermophilus (Thermus thermophilus phage P23-45).